The primary structure comprises 308 residues: Reaction center protein M chain (308 aa).

3 consecutive transmembrane segments (helical) span residues 54–80, 111–140, and 143–168; these read GSLG…YQAG, KEGG…RAQA, and MGKH…RPIL. The (7R,8Z)-bacteriochlorophyll b site is built by His-183 and His-203. Residues 198–226 traverse the membrane as a helical segment; that stretch reads FYNPFHGLSIAFLYGSALLFAMHGATILA. Residues His-220 and Glu-235 each coordinate Fe cation. Trp-253 serves as a coordination point for a ubiquinone. Residues 260–286 form a helical membrane-spanning segment; it reads NATMEGIHRWAIWMAVLVTLTGGIGIL. His-267 contributes to the Fe cation binding site.

It belongs to the reaction center PufL/M/PsbA/D family. As to quaternary structure, reaction center is composed of four bacteriochlorophylls, two bacteriopheophytins, two ubiquinones, one iron, and three highly hydrophobic polypeptide chains (designated L, M, and H).

It localises to the cellular chromatophore membrane. Its function is as follows. The reaction center is a membrane-bound complex that mediates the initial photochemical event in the electron transfer process of photosynthesis. This is Reaction center protein M chain (pufM) from Cereibacter sphaeroides (strain ATCC 17023 / DSM 158 / JCM 6121 / CCUG 31486 / LMG 2827 / NBRC 12203 / NCIMB 8253 / ATH 2.4.1.) (Rhodobacter sphaeroides).